The sequence spans 579 residues: Arginine--tRNA ligase (579 aa).

The short motif at 123–133 (PNLAKEMHVGH) is the 'HIGH' region element.

This sequence belongs to the class-I aminoacyl-tRNA synthetase family. As to quaternary structure, monomer.

Its subcellular location is the cytoplasm. The enzyme catalyses tRNA(Arg) + L-arginine + ATP = L-arginyl-tRNA(Arg) + AMP + diphosphate. In Cellvibrio japonicus (strain Ueda107) (Pseudomonas fluorescens subsp. cellulosa), this protein is Arginine--tRNA ligase.